A 366-amino-acid chain; its full sequence is Probable quinol oxidase subunit 2 (366 aa).

A signal peptide spans 1-19 (MSKFKSLLLLFGTLILLSG). Cys-20 is lipidated: N-palmitoyl cysteine. Cys-20 carries S-diacylglycerol cysteine lipidation. 2 helical membrane passes run 38–58 (FLIL…LGMF) and 80–100 (AIIE…LAIP). Positions 330-366 (EPYNNEFKKDESKNAKEMKKISKDAQDQDNDDHGGGH) are disordered. Positions 335–366 (EFKKDESKNAKEMKKISKDAQDQDNDDHGGGH) are enriched in basic and acidic residues.

This sequence belongs to the cytochrome c oxidase subunit 2 family.

The protein localises to the cell membrane. The catalysed reaction is 2 a quinol + O2 = 2 a quinone + 2 H2O. Functionally, catalyzes quinol oxidation with the concomitant reduction of oxygen to water. Subunit II transfers the electrons from a quinol to the binuclear center of the catalytic subunit I. In Staphylococcus aureus (strain USA300), this protein is Probable quinol oxidase subunit 2 (qoxA).